A 409-amino-acid chain; its full sequence is Regulator of Ty1 transposition protein 103 (409 aa).

The CID domain maps to 1 to 135 (MPFSSEQFTT…DIERSLKTES (135 aa)). Residues 250 to 409 (LNKNVDEDNI…IQDLLSKLAN (160 aa)) form a disordered region. Residues 266–289 (GDGDDDDDDGDNDDDDDDDDDDKN) are compositionally biased toward acidic residues. Basic and acidic residues-rich tracts occupy residues 307 to 323 (TDKK…EHKN), 337 to 363 (RTHD…KTSE), and 370 to 380 (EDGHYELDIEG).

This sequence belongs to the UPF0400 (RTT103) family. In terms of assembly, interacts with PCF11, RAI1, RAT1, RPO21 and RBP2.

The protein localises to the nucleus. In terms of biological role, involved in transcription termination by RNA polymerase II and in regulation of Ty1 transposition. This is Regulator of Ty1 transposition protein 103 (RTT103) from Saccharomyces cerevisiae (strain ATCC 204508 / S288c) (Baker's yeast).